A 296-amino-acid chain; its full sequence is Glycine--tRNA ligase alpha subunit (296 aa).

Belongs to the class-II aminoacyl-tRNA synthetase family. In terms of assembly, tetramer of two alpha and two beta subunits.

It is found in the cytoplasm. It catalyses the reaction tRNA(Gly) + glycine + ATP = glycyl-tRNA(Gly) + AMP + diphosphate. The polypeptide is Glycine--tRNA ligase alpha subunit (Polynucleobacter necessarius subsp. necessarius (strain STIR1)).